Here is a 142-residue protein sequence, read N- to C-terminus: Large ribosomal subunit protein uL11 (142 aa).

It belongs to the universal ribosomal protein uL11 family. As to quaternary structure, part of the ribosomal stalk of the 50S ribosomal subunit. Interacts with L10 and the large rRNA to form the base of the stalk. L10 forms an elongated spine to which L12 dimers bind in a sequential fashion forming a multimeric L10(L12)X complex. One or more lysine residues are methylated.

In terms of biological role, forms part of the ribosomal stalk which helps the ribosome interact with GTP-bound translation factors. This is Large ribosomal subunit protein uL11 from Mycolicibacterium vanbaalenii (strain DSM 7251 / JCM 13017 / BCRC 16820 / KCTC 9966 / NRRL B-24157 / PYR-1) (Mycobacterium vanbaalenii).